The following is a 385-amino-acid chain: Beta-lactamase (385 aa).

An N-terminal signal peptide occupies residues Met1 to Val20. Ser84 (acyl-ester intermediate) is an active-site residue. Tyr170 serves as the catalytic Proton acceptor. Lys335–Gly337 serves as a coordination point for substrate.

This sequence belongs to the class-C beta-lactamase family.

The protein resides in the periplasm. It catalyses the reaction a beta-lactam + H2O = a substituted beta-amino acid. Functionally, this protein is a serine beta-lactamase with a substrate specificity for cephalosporins. The chain is Beta-lactamase from Lysobacter lactamgenus.